The primary structure comprises 87 residues: Large ribosomal subunit protein bL27 (87 aa).

The protein belongs to the bacterial ribosomal protein bL27 family.

The sequence is that of Large ribosomal subunit protein bL27 from Paenarthrobacter aurescens (strain TC1).